A 357-amino-acid chain; its full sequence is F-box only protein 25 (357 aa).

Positions 1 to 83 (MPFLGQDWRS…NDTNTQCFYR (83 aa)) are interaction with beta-actin. An F-box domain is found at 225-273 (LTLSDLPVHMLSNILYRFSDGWDIVTLGQVTPTLSALSEDRQLWKKLCQ).

As to quaternary structure, part of a SCF (SKP1-cullin-F-box) protein ligase complex consisting of FBXO25, SKP1, CUL1 and RBX1. Interacts directly with SKP1 and CUL1. Interacts (via C-terminus) with beta-actin (via N-terminus).

The protein localises to the nucleus. Its pathway is protein modification; protein ubiquitination. In terms of biological role, substrate-recognition component of the SCF (SKP1-CUL1-F-box protein)-type E3 ubiquitin ligase complex. May play a role in accumulation of expanded polyglutamine (polyQ) protein huntingtin (HTT). The chain is F-box only protein 25 (FBXO25) from Bos taurus (Bovine).